The primary structure comprises 558 residues: DNA ligase B (558 aa).

Lysine 124 (N6-AMP-lysine intermediate) is an active-site residue.

Belongs to the NAD-dependent DNA ligase family. LigB subfamily.

The catalysed reaction is NAD(+) + (deoxyribonucleotide)n-3'-hydroxyl + 5'-phospho-(deoxyribonucleotide)m = (deoxyribonucleotide)n+m + AMP + beta-nicotinamide D-nucleotide.. In terms of biological role, catalyzes the formation of phosphodiester linkages between 5'-phosphoryl and 3'-hydroxyl groups in double-stranded DNA using NAD as a coenzyme and as the energy source for the reaction. This Klebsiella pneumoniae (strain 342) protein is DNA ligase B.